A 265-amino-acid polypeptide reads, in one-letter code: Hydroxyethylthiazole kinase (265 aa).

Residue Met43 participates in substrate binding. Residues Lys118 and Thr165 each coordinate ATP. Substrate is bound at residue Gly192.

It belongs to the Thz kinase family. Mg(2+) is required as a cofactor.

It catalyses the reaction 5-(2-hydroxyethyl)-4-methylthiazole + ATP = 4-methyl-5-(2-phosphooxyethyl)-thiazole + ADP + H(+). Its pathway is cofactor biosynthesis; thiamine diphosphate biosynthesis; 4-methyl-5-(2-phosphoethyl)-thiazole from 5-(2-hydroxyethyl)-4-methylthiazole: step 1/1. In terms of biological role, catalyzes the phosphorylation of the hydroxyl group of 4-methyl-5-beta-hydroxyethylthiazole (THZ). The sequence is that of Hydroxyethylthiazole kinase from Pyrococcus furiosus (strain ATCC 43587 / DSM 3638 / JCM 8422 / Vc1).